We begin with the raw amino-acid sequence, 288 residues long: ATP synthase gamma chain (288 aa).

The protein belongs to the ATPase gamma chain family. As to quaternary structure, F-type ATPases have 2 components, CF(1) - the catalytic core - and CF(0) - the membrane proton channel. CF(1) has five subunits: alpha(3), beta(3), gamma(1), delta(1), epsilon(1). CF(0) has three main subunits: a, b and c.

Its subcellular location is the cell inner membrane. Produces ATP from ADP in the presence of a proton gradient across the membrane. The gamma chain is believed to be important in regulating ATPase activity and the flow of protons through the CF(0) complex. In Rickettsia bellii (strain OSU 85-389), this protein is ATP synthase gamma chain.